Reading from the N-terminus, the 269-residue chain is 4-hydroxy-tetrahydrodipicolinate reductase (269 aa).

NAD(+)-binding positions include 9–14 (GAGGRM) and glutamate 35. Arginine 36 serves as a coordination point for NADP(+). Residues 98 to 100 (GTT) and 122 to 125 (ASNY) each bind NAD(+). Histidine 155 acts as the Proton donor/acceptor in catalysis. Histidine 156 lines the (S)-2,3,4,5-tetrahydrodipicolinate pocket. The active-site Proton donor is the lysine 159. 165–166 (GT) lines the (S)-2,3,4,5-tetrahydrodipicolinate pocket.

It belongs to the DapB family.

Its subcellular location is the cytoplasm. It carries out the reaction (S)-2,3,4,5-tetrahydrodipicolinate + NAD(+) + H2O = (2S,4S)-4-hydroxy-2,3,4,5-tetrahydrodipicolinate + NADH + H(+). It catalyses the reaction (S)-2,3,4,5-tetrahydrodipicolinate + NADP(+) + H2O = (2S,4S)-4-hydroxy-2,3,4,5-tetrahydrodipicolinate + NADPH + H(+). The protein operates within amino-acid biosynthesis; L-lysine biosynthesis via DAP pathway; (S)-tetrahydrodipicolinate from L-aspartate: step 4/4. In terms of biological role, catalyzes the conversion of 4-hydroxy-tetrahydrodipicolinate (HTPA) to tetrahydrodipicolinate. In Actinobacillus pleuropneumoniae serotype 7 (strain AP76), this protein is 4-hydroxy-tetrahydrodipicolinate reductase.